The following is a 396-amino-acid chain: NADH-quinone oxidoreductase subunit D (396 aa).

It belongs to the complex I 49 kDa subunit family. NDH-1 is composed of 14 different subunits. Subunits NuoB, C, D, E, F, and G constitute the peripheral sector of the complex.

The protein localises to the cell inner membrane. It catalyses the reaction a quinone + NADH + 5 H(+)(in) = a quinol + NAD(+) + 4 H(+)(out). Functionally, NDH-1 shuttles electrons from NADH, via FMN and iron-sulfur (Fe-S) centers, to quinones in the respiratory chain. The immediate electron acceptor for the enzyme in this species is believed to be ubiquinone. Couples the redox reaction to proton translocation (for every two electrons transferred, four hydrogen ions are translocated across the cytoplasmic membrane), and thus conserves the redox energy in a proton gradient. The sequence is that of NADH-quinone oxidoreductase subunit D from Bartonella henselae (strain ATCC 49882 / DSM 28221 / CCUG 30454 / Houston 1) (Rochalimaea henselae).